The sequence spans 187 residues: Elongation factor P (187 aa).

Belongs to the elongation factor P family.

The protein localises to the cytoplasm. Its pathway is protein biosynthesis; polypeptide chain elongation. Functionally, involved in peptide bond synthesis. Stimulates efficient translation and peptide-bond synthesis on native or reconstituted 70S ribosomes in vitro. Probably functions indirectly by altering the affinity of the ribosome for aminoacyl-tRNA, thus increasing their reactivity as acceptors for peptidyl transferase. The protein is Elongation factor P of Ruegeria sp. (strain TM1040) (Silicibacter sp.).